A 293-amino-acid chain; its full sequence is Movement protein BC1 (293 aa).

Belongs to the begomovirus movement protein BC1 family. In terms of assembly, binds to dimeric supercoiled plasmid DNA. Phosphorylated.

The protein localises to the host cell membrane. It is found in the host microsome membrane. Its subcellular location is the host endoplasmic reticulum membrane. Transports viral genome to neighboring plant cells directly through plasmosdesmata, without any budding. The movement protein allows efficient cell to cell propagation, by bypassing the host cell wall barrier. Begomovirus genome is shuttled out of nucleus by Nuclear shuttle protein (NSP) and the movement protein transports the DNA-NSP complex to cell plasmodesmata and facilitates further movement across the cell wall. In Cucurbita moschata (Winter crookneck squash), this protein is Movement protein BC1.